We begin with the raw amino-acid sequence, 363 residues long: 3-dehydroquinate synthase (363 aa).

NAD(+) contacts are provided by residues 75–80 (DAEEGK), 109–113 (GAVTD), 133–134 (TS), Lys-146, Lys-155, and 173–176 (TLQT). Positions 188, 251, and 267 each coordinate Zn(2+).

The protein belongs to the sugar phosphate cyclases superfamily. Dehydroquinate synthase family. Co(2+) serves as cofactor. The cofactor is Zn(2+). Requires NAD(+) as cofactor.

Its subcellular location is the cytoplasm. It carries out the reaction 7-phospho-2-dehydro-3-deoxy-D-arabino-heptonate = 3-dehydroquinate + phosphate. It functions in the pathway metabolic intermediate biosynthesis; chorismate biosynthesis; chorismate from D-erythrose 4-phosphate and phosphoenolpyruvate: step 2/7. Catalyzes the conversion of 3-deoxy-D-arabino-heptulosonate 7-phosphate (DAHP) to dehydroquinate (DHQ). This Paenarthrobacter aurescens (strain TC1) protein is 3-dehydroquinate synthase.